The chain runs to 595 residues: UvrABC system protein C (595 aa).

The GIY-YIG domain maps to 14–91; sequence SNPGCYLHKD…IQENMPKFNI (78 aa). The 36-residue stretch at 196–231 folds into the UVR domain; sequence DKIVNQLKAKMKDMSDQMAFERAAEYRDLIEAVSTL.

The protein belongs to the UvrC family. In terms of assembly, interacts with UvrB in an incision complex.

Its subcellular location is the cytoplasm. In terms of biological role, the UvrABC repair system catalyzes the recognition and processing of DNA lesions. UvrC both incises the 5' and 3' sides of the lesion. The N-terminal half is responsible for the 3' incision and the C-terminal half is responsible for the 5' incision. The chain is UvrABC system protein C from Streptococcus thermophilus (strain ATCC BAA-491 / LMD-9).